We begin with the raw amino-acid sequence, 87 residues long: U3-theraphotoxin-Hhn1p (87 aa).

The first 24 residues, 1 to 24 (MVNMKASMFLTFAGLVLLFVVCYA), serve as a signal peptide directing secretion. A propeptide spanning residues 25–52 (SESEEKEFPKEMLSSIFAVDNDFKQEER) is cleaved from the precursor. Disulfide bonds link Cys54/Cys67, Cys61/Cys72, and Cys66/Cys79.

The protein belongs to the neurotoxin 10 (Hwtx-1) family. 51 (Hntx-8) subfamily. Hntx-8 sub-subfamily. Expressed by the venom gland.

It localises to the secreted. In terms of biological role, ion channel inhibitor. The sequence is that of U3-theraphotoxin-Hhn1p from Cyriopagopus hainanus (Chinese bird spider).